The primary structure comprises 94 residues: Large ribosomal subunit protein bL27 (94 aa).

The propeptide occupies 1-9; sequence MLELNLQLF. The disordered stretch occupies residues 12–33; the sequence is KKGGGSTSNGRDSQAKRLGAKA.

The protein belongs to the bacterial ribosomal protein bL27 family. Post-translationally, the N-terminus is cleaved by ribosomal processing cysteine protease Prp.

In Lactococcus lactis subsp. lactis (strain IL1403) (Streptococcus lactis), this protein is Large ribosomal subunit protein bL27.